We begin with the raw amino-acid sequence, 194 residues long: Ion-translocating oxidoreductase complex subunit A (194 aa).

6 helical membrane-spanning segments follow: residues valine 5–leucine 25, phenylalanine 47–phenylalanine 67, leucine 72–valine 92, valine 102–leucine 122, leucine 135–methionine 155, and serine 172–isoleucine 192.

This sequence belongs to the NqrDE/RnfAE family. In terms of assembly, the complex is composed of six subunits: RnfA, RnfB, RnfC, RnfD, RnfE and RnfG.

The protein localises to the cell inner membrane. Functionally, part of a membrane-bound complex that couples electron transfer with translocation of ions across the membrane. This is Ion-translocating oxidoreductase complex subunit A from Alcanivorax borkumensis (strain ATCC 700651 / DSM 11573 / NCIMB 13689 / SK2).